Consider the following 59-residue polypeptide: MDHRLLEIVACPVCKGKLTYDKDRQELICKLDRLAYPIKEGIPVLLEPEARSMSMDEGR.

Belongs to the UPF0434 family.

The polypeptide is UPF0434 protein VC_1876 (Vibrio cholerae serotype O1 (strain ATCC 39315 / El Tor Inaba N16961)).